The sequence spans 317 residues: MPVQGSQRRLLGSLNSTPTAPPHLGLAANQTGARCLEVSIPDGLFLSLGLVSLVENVLVVTAIAKNRNLHSPMYCFICCLALSDLLVSGSNMLETAVILLLEAGALAARAAVVQQLDNVIDVITCSSMLSSLCFLGAIAVDRYISIFYALRYHSIVTLPRARRAVAAIWVASVLFSMLFIAYYDHAAVLLCLVVFFLAMLVLMAVLYIHMLVRACQHAQGIARLHKRQRPAHQGFGLKGAATLTILLGIFFLCWGPFFLHLTLIVLCPQHPTCSCIFKNFNLFLALIICNAIIDPLIYAFRSQELRRTLKEVLLCSW.

At 1 to 37 (MPVQGSQRRLLGSLNSTPTAPPHLGLAANQTGARCLE) the chain is on the extracellular side. Residue Asn29 is glycosylated (N-linked (GlcNAc...) asparagine). A helical transmembrane segment spans residues 38–63 (VSIPDGLFLSLGLVSLVENVLVVTAI). The Cytoplasmic portion of the chain corresponds to 64-72 (AKNRNLHSP). Residues 73–93 (MYCFICCLALSDLLVSGSNML) form a helical membrane-spanning segment. Residues 94-118 (ETAVILLLEAGALAARAAVVQQLDN) lie on the Extracellular side of the membrane. Residues 119–140 (VIDVITCSSMLSSLCFLGAIAV) traverse the membrane as a helical segment. The Cytoplasmic segment spans residues 141–163 (DRYISIFYALRYHSIVTLPRARR). A helical membrane pass occupies residues 164–183 (AVAAIWVASVLFSMLFIAYY). At 184–191 (DHAAVLLC) the chain is on the extracellular side. The chain crosses the membrane as a helical span at residues 192–211 (LVVFFLAMLVLMAVLYIHML). Over 212 to 240 (VRACQHAQGIARLHKRQRPAHQGFGLKGA) the chain is Cytoplasmic. A helical transmembrane segment spans residues 241 to 266 (ATLTILLGIFFLCWGPFFLHLTLIVL). Residues 267–279 (CPQHPTCSCIFKN) are Extracellular-facing. The chain crosses the membrane as a helical span at residues 280–300 (FNLFLALIICNAIIDPLIYAF). The Cytoplasmic portion of the chain corresponds to 301–317 (RSQELRRTLKEVLLCSW). The S-palmitoyl cysteine moiety is linked to residue Cys315.

It belongs to the G-protein coupled receptor 1 family. In terms of assembly, interacts with MGRN1, but does not undergo MGRN1-mediated ubiquitination; this interaction competes with GNAS-binding and thus inhibits agonist-induced cAMP production. Interacts with OPN3; the interaction results in a decrease in MC1R-mediated cAMP signaling and ultimately a decrease in melanin production in melanocytes.

It localises to the cell membrane. Functionally, receptor for MSH (alpha, beta and gamma) and ACTH. The activity of this receptor is mediated by G proteins which activate adenylate cyclase. Mediates melanogenesis, the production of eumelanin (black/brown) and phaeomelanin (red/yellow), via regulation of cAMP signaling in melanocytes. The sequence is that of Melanocyte-stimulating hormone receptor (MC1R) from Cercopithecus diana (Diana monkey).